A 173-amino-acid chain; its full sequence is CASP-like protein 2D1 (173 aa).

Over 1–9 (MAPLLKLLD) the chain is Cytoplasmic. The helical transmembrane segment at 10–29 (SSLRVSVIPLSAATIWLTVT) threads the bilayer. The Extracellular segment spans residues 30 to 50 (NHQDNSSYGNLKYSNIMGLKY). N-linked (GlcNAc...) asparagine glycosylation occurs at N34. The chain crosses the membrane as a helical span at residues 51 to 71 (MVCISAICASYAFVAAVSIWI). Topologically, residues 72–86 (KCLVNKVWLFFVSDQ) are cytoplasmic. A helical membrane pass occupies residues 87-107 (IIAYLMVTSVAAAMEILYIAY). Topologically, residues 108–131 (NGDQKVTWSEACTSYGKFCNGMKT) are extracellular. A helical membrane pass occupies residues 132–152 (ALILHALTLCFFIVLAVISAY). Residues 153-173 (RAFSMYQPPVSSKETVEGDAT) lie on the Cytoplasmic side of the membrane.

Belongs to the Casparian strip membrane proteins (CASP) family. Homodimer and heterodimers.

Its subcellular location is the cell membrane. This Ricinus communis (Castor bean) protein is CASP-like protein 2D1.